The chain runs to 472 residues: 12S seed storage protein CRA1 (472 aa).

The first 24 residues, 1–24 (MARVSSLLSFCLTLLILFHGYAAQ), serve as a signal peptide directing secretion. 2 disulfide bridges follow: C36–C69 and C112–C289. Residues 41 to 236 (LNALEPSHVL…ALKIDLQTAQ (196 aa)) form the Cupin type-1 1 domain. Position 115 is a phosphothreonine (T115). Residues 259 to 283 (RPPLRGQRPQEEEEEEGRHGRHGNG) are disordered. Positions 295–444 (DNLDDPSRAD…GFQISPEEAR (150 aa)) constitute a Cupin type-1 2 domain. Position 312 is a phosphotyrosine (Y312). S314 carries the post-translational modification Phosphoserine. Phosphothreonine occurs at positions 408 and 433.

This sequence belongs to the 11S seed storage protein (globulins) family. Hexamer; each subunit is composed of an acidic and a basic chain derived from a single precursor and linked by a disulfide bond. Post-translationally, phosphorylated in seeds on some Tyr residues in response to abscisic acid (ABA). In terms of processing, proteolytically processed during seed maturation at a conserved Asn-Gly peptide bond by an asparaginyl endopeptidase to produce two mature polypeptides referred to as alpha and beta subunits that are joined together by a disulfide bond. As to expression, accumulates in seeds 8 days after anthesis.

The protein resides in the protein storage vacuole. Its function is as follows. Seed storage protein. This Arabidopsis thaliana (Mouse-ear cress) protein is 12S seed storage protein CRA1 (CRA1).